Consider the following 630-residue polypeptide: 1-deoxy-D-xylulose-5-phosphate synthase (630 aa).

Thiamine diphosphate-binding positions include His-72 and 113–115 (GHS). Asp-144 provides a ligand contact to Mg(2+). Thiamine diphosphate contacts are provided by residues 145–146 (GA), Asn-173, Tyr-284, and Glu-367. Asn-173 serves as a coordination point for Mg(2+).

This sequence belongs to the transketolase family. DXPS subfamily. Homodimer. It depends on Mg(2+) as a cofactor. Thiamine diphosphate is required as a cofactor.

It carries out the reaction D-glyceraldehyde 3-phosphate + pyruvate + H(+) = 1-deoxy-D-xylulose 5-phosphate + CO2. The protein operates within metabolic intermediate biosynthesis; 1-deoxy-D-xylulose 5-phosphate biosynthesis; 1-deoxy-D-xylulose 5-phosphate from D-glyceraldehyde 3-phosphate and pyruvate: step 1/1. Catalyzes the acyloin condensation reaction between C atoms 2 and 3 of pyruvate and glyceraldehyde 3-phosphate to yield 1-deoxy-D-xylulose-5-phosphate (DXP). This Bacillus mycoides (strain KBAB4) (Bacillus weihenstephanensis) protein is 1-deoxy-D-xylulose-5-phosphate synthase.